A 370-amino-acid polypeptide reads, in one-letter code: Histidinol-phosphate aminotransferase 3 (370 aa).

K229 carries the N6-(pyridoxal phosphate)lysine modification.

It belongs to the class-II pyridoxal-phosphate-dependent aminotransferase family. Histidinol-phosphate aminotransferase subfamily. Homodimer. It depends on pyridoxal 5'-phosphate as a cofactor.

The enzyme catalyses L-histidinol phosphate + 2-oxoglutarate = 3-(imidazol-4-yl)-2-oxopropyl phosphate + L-glutamate. The protein operates within amino-acid biosynthesis; L-histidine biosynthesis; L-histidine from 5-phospho-alpha-D-ribose 1-diphosphate: step 7/9. The protein is Histidinol-phosphate aminotransferase 3 (hisC3) of Rhizobium meliloti (strain 1021) (Ensifer meliloti).